Consider the following 339-residue polypeptide: Putative P2Y purinoceptor 10 (339 aa).

The Extracellular portion of the chain corresponds to 1–39 (MANLDKYTETFKMGSNSTSTAEIYCNVTNVKFQYSLYAT). N-linked (GlcNAc...) asparagine glycans are attached at residues Asn16 and Asn26. Residues 40-60 (TYILIFIPGLLANSAALWVLC) form a helical membrane-spanning segment. Residues 61 to 68 (RFISKKNK) are Cytoplasmic-facing. Residues 69 to 89 (AIIFMINLSVADLAHVLSLPL) form a helical membrane-spanning segment. Over 90–103 (RIYYYISHHWPFQR) the chain is Extracellular. A helical transmembrane segment spans residues 104 to 124 (ALCLLCFYLKYLNMYASICFL). An intrachain disulfide couples Cys106 to Cys181. The Cytoplasmic portion of the chain corresponds to 125–149 (TCISLQRCFFLLKPFRARDWKRRYD). The helical transmembrane segment at 150–170 (VGISAAIWIVVGTACLPFPIL) threads the bilayer. The Extracellular portion of the chain corresponds to 171–193 (RSTDLNNNKSCFADLGYKQMNAV). N-linked (GlcNAc...) asparagine glycosylation is present at Asn178. The helical transmembrane segment at 194 to 214 (ALVGMITVAELAGFVIPVIII) threads the bilayer. The Cytoplasmic segment spans residues 215 to 244 (AWCTWKTTISLRQPPMAFQGISERQKALRM). A helical membrane pass occupies residues 245–265 (VFMCAAVFFICFTPYHINFIF). Over 266-288 (YTMVKETIISSCPVVRIALYFHP) the chain is Extracellular. Residues 289 to 309 (FCLCLASLCCLLDPILYYFMA) form a helical membrane-spanning segment. Residues 310-339 (SEFRDQLSRHGSSVTRSRLMSKESGSSMIG) are Cytoplasmic-facing.

The protein belongs to the G-protein coupled receptor 1 family. As to expression, weakly expressed in blood leukocytes.

It is found in the cell membrane. In terms of biological role, putative receptor for purines coupled to G-proteins. This Homo sapiens (Human) protein is Putative P2Y purinoceptor 10 (P2RY10).